Here is a 311-residue protein sequence, read N- to C-terminus: Methionyl-tRNA formyltransferase (311 aa).

Position 110–113 (110–113) interacts with (6S)-5,6,7,8-tetrahydrofolate; it reads SLLP.

It belongs to the Fmt family.

It catalyses the reaction L-methionyl-tRNA(fMet) + (6R)-10-formyltetrahydrofolate = N-formyl-L-methionyl-tRNA(fMet) + (6S)-5,6,7,8-tetrahydrofolate + H(+). Functionally, attaches a formyl group to the free amino group of methionyl-tRNA(fMet). The formyl group appears to play a dual role in the initiator identity of N-formylmethionyl-tRNA by promoting its recognition by IF2 and preventing the misappropriation of this tRNA by the elongation apparatus. This is Methionyl-tRNA formyltransferase from Streptococcus pneumoniae (strain JJA).